Consider the following 208-residue polypeptide: Thymidylate kinase (208 aa).

10–17 (GGEGVGKS) provides a ligand contact to ATP.

It belongs to the thymidylate kinase family.

It carries out the reaction dTMP + ATP = dTDP + ADP. Its function is as follows. Phosphorylation of dTMP to form dTDP in both de novo and salvage pathways of dTTP synthesis. This chain is Thymidylate kinase, found in Rhizorhabdus wittichii (strain DSM 6014 / CCUG 31198 / JCM 15750 / NBRC 105917 / EY 4224 / RW1) (Sphingomonas wittichii).